Reading from the N-terminus, the 62-residue chain is Photosystem II reaction center protein Z (62 aa).

2 helical membrane-spanning segments follow: residues 8–28 and 41–61; these read AVFA…VVLA and FSGA…NSFV.

The protein belongs to the PsbZ family. In terms of assembly, PSII is composed of 1 copy each of membrane proteins PsbA, PsbB, PsbC, PsbD, PsbE, PsbF, PsbH, PsbI, PsbJ, PsbK, PsbL, PsbM, PsbT, PsbY, PsbZ, Psb30/Ycf12, at least 3 peripheral proteins of the oxygen-evolving complex and a large number of cofactors. It forms dimeric complexes.

It is found in the plastid. The protein localises to the chloroplast thylakoid membrane. May control the interaction of photosystem II (PSII) cores with the light-harvesting antenna, regulates electron flow through the 2 photosystem reaction centers. PSII is a light-driven water plastoquinone oxidoreductase, using light energy to abstract electrons from H(2)O, generating a proton gradient subsequently used for ATP formation. This Zygnema circumcarinatum (Green alga) protein is Photosystem II reaction center protein Z.